A 309-amino-acid polypeptide reads, in one-letter code: Sulfate adenylyltransferase subunit 2 (309 aa).

The protein belongs to the PAPS reductase family. CysD subfamily. Heterodimer composed of CysD, the smaller subunit, and CysN.

It carries out the reaction sulfate + ATP + H(+) = adenosine 5'-phosphosulfate + diphosphate. The protein operates within sulfur metabolism; hydrogen sulfide biosynthesis; sulfite from sulfate: step 1/3. With CysN forms the ATP sulfurylase (ATPS) that catalyzes the adenylation of sulfate producing adenosine 5'-phosphosulfate (APS) and diphosphate, the first enzymatic step in sulfur assimilation pathway. APS synthesis involves the formation of a high-energy phosphoric-sulfuric acid anhydride bond driven by GTP hydrolysis by CysN coupled to ATP hydrolysis by CysD. This Mycobacterium bovis (strain ATCC BAA-935 / AF2122/97) protein is Sulfate adenylyltransferase subunit 2.